Consider the following 236-residue polypeptide: CBS domain-containing protein CBSX1, chloroplastic (236 aa).

A chloroplast-targeting transit peptide spans 1–53 (MDAVLYSVPLSFTPLRASSSPSSPYLLLPRFLSVQPCHKFTFSRSFPSKSRIP). The segment at 47 to 66 (PSKSRIPSASSAAGSTLMTN) is disordered. S54 carries the N-acetylserine modification. CBS domains follow at residues 81–142 (MTKK…GRTE) and 175–231 (MTPA…IKRS).

The protein resides in the plastid. It is found in the chloroplast. The polypeptide is CBS domain-containing protein CBSX1, chloroplastic (CBSX1) (Arabidopsis thaliana (Mouse-ear cress)).